The sequence spans 974 residues: Probable proton ATPase 1A (974 aa).

Residues 1 to 23 (MSSKKYELDAAAFEDKPESHSDA) show a composition bias toward basic and acidic residues. A disordered region spans residues 1–61 (MSSKKYELDA…ATDLLPPSKG (61 aa)). Residues 1–92 (MSSKKYELDA…KTPSWLIYVR (92 aa)) are Cytoplasmic-facing. Residues 93–112 (GLWGPMPAALWIAIIIEFAL) traverse the membrane as a helical segment. At 113–117 (ENWPD) the chain is on the extracellular side. Residues 118-137 (GAILFAIQIANATIGWYETI) traverse the membrane as a helical segment. Residues 138–264 (KAGDAVAALK…LGNIHVILRR (127 aa)) lie on the Cytoplasmic side of the membrane. A helical transmembrane segment spans residues 265–286 (VMFSLCAISFMLCMCCFIYLLA). Residues 287–294 (RFYETFRH) lie on the Extracellular side of the membrane. The chain crosses the membrane as a helical span at residues 295-321 (ALQFAVVVLVVSIPIALEIVVTTTLAV). Residues 322–630 (GSKHLSKHKI…AVHGATDAAR (309 aa)) are Cytoplasmic-facing. The active-site 4-aspartylphosphate intermediate is Asp-351. Mg(2+) contacts are provided by Asp-605 and Asp-609. Residues 631–651 (AAADMVLTEPGLSVVVEAMLV) form a helical membrane-spanning segment. At 652-661 (SREVFQRMLS) the chain is on the extracellular side. The chain crosses the membrane as a helical span at residues 662–684 (FLTYRISATLQLVCFFFIACFSL). The Cytoplasmic segment spans residues 685–697 (TPKAYGSVDPHFQ). The chain crosses the membrane as a helical span at residues 698–712 (FFHLPVLMFMLITLL). Residues 713 to 737 (NDGCLMTIGYDHVIPSERPQKWNLP) are Extracellular-facing. Residue Asp-714 coordinates Mg(2+). Residues 738 to 761 (VVFVSASILAAVACGSSLMLLWIG) form a helical membrane-spanning segment. Topologically, residues 762–812 (LEGYSSQYYENSWFHRLGLAQLPQGKLVTMMYLKISISDFLTLFSSRTGGH) are cytoplasmic. A helical transmembrane segment spans residues 813 to 840 (FFFYMPPSPILFCGAIISLLVSTMAASF). Residues 841-868 (WHKSRPDNVLTEGLAWGQTNAEKLLPLW) are Extracellular-facing. Residues 869 to 887 (VWIYCIVWWFVQDVVKVLA) traverse the membrane as a helical segment. The Cytoplasmic segment spans residues 888–974 (HICMDAVDLF…VNVYVSRDQK (87 aa)). A compositionally biased stretch (basic and acidic residues) spans 950 to 959 (GLREDTHSPI). Residues 950–974 (GLREDTHSPIEEASPVNVYVSRDQK) are disordered.

This sequence belongs to the cation transport ATPase (P-type) (TC 3.A.3) family. Type IIIA subfamily.

It is found in the membrane. The catalysed reaction is ATP + H2O + H(+)(in) = ADP + phosphate + 2 H(+)(out). The polypeptide is Probable proton ATPase 1A (H1A) (Leishmania donovani).